Here is an 857-residue protein sequence, read N- to C-terminus: MCPSDFSSRSLFLEAKEEEYKQRRRVPLDSRRRVRRACLSCRAKKIRCSGSEPCQACIATPSQCKYADSLKERTPSKQFIAELSQRQKCFEYLMELLCPSLPHDTRSLVKLCKHVESSLASGSDVRSLLIPGSIDQSVLKVAATNNKDDSSAVKSANVSFPSSSTPPSSDSNFSSIQNTDLNTSIKFTENISANAIHVNQDKVIRSANNLIINSQPILPVRSFLDALGEPIYLSPTSSTYFLNSVLASLQLNSSNTPESLLIDYQSKIPEDLSSSLLPLELNTLQSTPTSVSVGSASSQGTHEYSIINLTSNHSSFSLKALKKIAHNLLPPVSVAERYANEFFLRYQSFFYFYPPSVFSNRYQILADGLVNSDTLDTGFLAVALLIVVLGHFSNNNINVLPKEVQLSHIDSMIQISEQLISSLLNRCTLSSIQAVFLLSLYHFLTGNFKCAYSYLGFAIHSAHTLGLEHGSTDNSTLNEVSTEETSIRICWSLRVLASFLYIQSGITPIINLFPNGLNSLKLPTVVPELEARHLPSSVFHFVAIIKYAEISVRSLNSLYESSSDYLMDVSNFPKLLLKVERIYSQARNWKLNLTHQQLNGTNDTSDLLFHSNVSLHLFYHYLIVKVSCPIMFFYLNNWYSVKPSSFTKGLNNKPSLEDVFSNLETCYESAKAIVQLSSKLLSAGQMDKCFYLEFEILYCSAIVLFLFSVMHLGAENPLLESIYLLEDMGSRTIDSKVRLEKLKSAIEIFDINSATEMPINEPLSASFESVNKENSQSGYMAWQNWVTELSSSNIPLGHALGNPESNNSSNSFKPSHPSQSFLVNESLDFSSNPKEPPFLPWSEALLNMDMQLNRLGP.

Positions 38 to 64 (CLSCRAKKIRCSGSEPCQACIATPSQC) form a DNA-binding region, zn(2)-C6 fungal-type. 2 disordered regions span residues 152–175 (AVKS…NFSS) and 797–819 (GHAL…HPSQ). A compositionally biased stretch (low complexity) spans 159–175 (SFPSSSTPPSSDSNFSS). Polar residues predominate over residues 803-819 (PESNNSSNSFKPSHPSQ).

The protein resides in the nucleus. In terms of biological role, transcription factor that activates the nmt1 promoter. Regulation of thiamine repressible genes. Negatively regulates conjugation during meiosis, by inducing negative regulators which delay conjugation. Involved in thi1 regulation. This Schizosaccharomyces pombe (strain 972 / ATCC 24843) (Fission yeast) protein is Thiamine repressible genes regulatory protein thi5 (thi5).